The primary structure comprises 729 residues: Solute carrier family 15 member 2 (729 aa).

Residues 1 to 34 (MNPFQKNESKETLFSPVSIEEVPPRPPSPPKKPS) form a disordered region. The Cytoplasmic portion of the chain corresponds to 1–57 (MNPFQKNESKETLFSPVSIEEVPPRPPSPPKKPSPTICGSNYPLSIAFIVVNEFCER). Ser9 carries the phosphoserine modification. At Thr12 the chain carries Phosphothreonine. Over residues 24–33 (PRPPSPPKKP) the composition is skewed to pro residues. Ser28 carries the post-translational modification Phosphoserine. A helical membrane pass occupies residues 58-78 (FSYYGMKAVLILYFLYFLHWN). The Extracellular segment spans residues 79-83 (EDTST). The chain crosses the membrane as a helical span at residues 84-104 (SIYHAFSSLCYFTPILGAAIA). The Cytoplasmic segment spans residues 105 to 113 (DSWLGKFKT). Residues 114–134 (IIYLSLVYVLGHVIKSLGALP) form a helical membrane-spanning segment. The Extracellular segment spans residues 135–139 (ILGGQ). Residues 140–160 (VVHTVLSLIGLSLIALGTGGI) form a helical membrane-spanning segment. At 161–183 (KPCVAAFGGDQFEEKHAEERTRY) the chain is on the cytoplasmic side. The chain crosses the membrane as a helical span at residues 184 to 204 (FSVFYLSINAGSLISTFITPM). The Extracellular portion of the chain corresponds to 205–217 (LRGDVQCFGEDCY). A helical transmembrane segment spans residues 218–238 (ALAFGVPGLLMVIALVVFAMG). At 239-295 (SKIYNKPPPEGNIVAQVFKCIWFAISNRFKNRSGDIPKRQHWLDWAAEKYPKQLIMD) the chain is on the cytoplasmic side. Residues 296-316 (VKALTRVLFLYIPLPMFWALL) traverse the membrane as a helical segment. At 317–343 (DQQGSRWTLQAIRMNRNLGFFVLQPDQ) the chain is on the extracellular side. The helical transmembrane segment at 344 to 364 (MQVLNPLLVLIFIPLFDFVIY) threads the bilayer. Over 365 to 380 (RLVSKCGINFSSLRKM) the chain is Cytoplasmic. Residues 381–401 (AVGMILACLAFAVAAAVEIKI) form a helical membrane-spanning segment. Over 402 to 611 (NEMAPAQPGP…PANKMSIAWQ (210 aa)) the chain is Extracellular. Residues 402–611 (NEMAPAQPGP…PANKMSIAWQ (210 aa)) are extracellular domain (ECD). N-linked (GlcNAc...) asparagine glycosylation is found at Asn435, Asn472, Asn528, Asn567, and Asn587. A helical transmembrane segment spans residues 612–632 (LPQYALVTAGEVMFSVTGLEF). The Cytoplasmic portion of the chain corresponds to 633–643 (SYSQAPSSMKS). A helical transmembrane segment spans residues 644–664 (VLQAAWLLTIAVGNIIVLVVA). At 665-674 (QFSGLVQWAE) the chain is on the extracellular side. The chain crosses the membrane as a helical span at residues 675-695 (FILFSCLLLVICLIFSIMGYY). The Cytoplasmic segment spans residues 696–729 (YVPVKTEDMRGPADKHIPHIQGNMIKLETKKTKL).

This sequence belongs to the major facilitator superfamily. Proton-dependent oligopeptide transporter (POT/PTR) (TC 2.A.17) family. As to quaternary structure, interacts (via extracellular domain region) with trypsin. As to expression, expressed in kidney. Not detected in intestine. Highly expressed in macrophages.

It localises to the apical cell membrane. Its subcellular location is the cytoplasmic vesicle. The protein resides in the phagosome membrane. It is found in the cell membrane. The catalysed reaction is a dipeptide(out) + 2 H(+)(out) = a dipeptide(in) + 2 H(+)(in). The enzyme catalyses N-acetyl-D-muramoyl-L-alanyl-D-isoglutamine(out) + 3 H(+)(out) = N-acetyl-D-muramoyl-L-alanyl-D-isoglutamine(in) + 3 H(+)(in). It catalyses the reaction glycyl-L-leucine(out) + 2 H(+)(out) = glycyl-L-leucine(in) + 2 H(+)(in). It carries out the reaction glycyl-L-lysine(out) + 2 H(+)(out) = glycyl-L-lysine(in) + 2 H(+)(in). The catalysed reaction is glycyl-L-glutamate(out) + 3 H(+)(out) = glycyl-L-glutamate(in) + 3 H(+)(in). The enzyme catalyses L-alanyl-L-alanine(out) + 2 H(+)(out) = L-alanyl-L-alanine(in) + 2 H(+)(in). It catalyses the reaction an L-amino acid tripeptide(out) + 2 H(+)(out) = an L-amino acid tripeptide(in) + 2 H(+)(in). It carries out the reaction carnosine(out) + 2 H(+)(out) = carnosine(in) + 2 H(+)(in). Proton-coupled amino-acid transporter that transports oligopeptides of 2 to 4 amino acids with a preference for dipeptides. Transports neutral and anionic dipeptides with a proton to peptide stoichiometry of 2:1 or 3:1. In kidney, involved in the absorption of circulating di- and tripeptides from the glomerular filtrate. Can also transport beta-lactam antibiotics, such as the aminocephalosporin cefadroxil, and other antiviral and anticancer drugs. Transports the dipeptide-like aminopeptidase inhibitor bestatin. Also able to transport carnosine. Involved in innate immunity by promoting the detection of microbial pathogens by NOD-like receptors (NLRs). Mediates transport of bacterial peptidoglycans across the plasma membrane or, in macrophages, the phagosome membrane: catalyzes the transport of certain bacterial peptidoglycans, such as muramyl dipeptide (MDP), the NOD2 ligand. This is Solute carrier family 15 member 2 from Homo sapiens (Human).